Here is a 490-residue protein sequence, read N- to C-terminus: Phenylacetaldehyde synthase (490 aa).

3 residues coordinate L-phenylalanine: proline 92, histidine 193, and histidine 308. The residue at position 309 (lysine 309) is an N6-(pyridoxal phosphate)lysine. Residue phenylalanine 338 coordinates L-phenylalanine.

The protein belongs to the group II decarboxylase family. As to quaternary structure, homodimer. The cofactor is pyridoxal 5'-phosphate. Expressed in roots, rosette leaves, stems, cauline leaves and flowers.

It catalyses the reaction L-phenylalanine + O2 + H2O + H(+) = 2-phenylacetaldehyde + H2O2 + NH4(+) + CO2. The enzyme catalyses L-dopa + O2 + H2O + H(+) = 3,4-dihydroxyphenylacetaldehyde + H2O2 + NH4(+) + CO2. Its function is as follows. Bifunctional enzyme that catalyzes the decarboxylation of L-phenylalanine to 2-phenylethylamine, which is then oxidized to form 2-phenylacetaldehyde, a constituent of floral scent. 2-phenylacetaldehyde is a precursor of 2-phenylethanol, another constituent of floral scent. Catalyzes both the decarboxylation and deamination of L-dopa to 3,4-dihydroxylphenylacetaldehyde (DHPAA). The sequence is that of Phenylacetaldehyde synthase from Arabidopsis thaliana (Mouse-ear cress).